A 308-amino-acid chain; its full sequence is Ribosomal RNA large subunit methyltransferase F (308 aa).

Belongs to the methyltransferase superfamily. METTL16/RlmF family.

It localises to the cytoplasm. It carries out the reaction adenosine(1618) in 23S rRNA + S-adenosyl-L-methionine = N(6)-methyladenosine(1618) in 23S rRNA + S-adenosyl-L-homocysteine + H(+). Specifically methylates the adenine in position 1618 of 23S rRNA. The polypeptide is Ribosomal RNA large subunit methyltransferase F (Escherichia coli O127:H6 (strain E2348/69 / EPEC)).